The primary structure comprises 325 residues: MSWFTPELIEILISVLKAVVILLVVVTCGAFMSFGERRLLGLFQNRYGPNRVGWGGSLQLVADMIKMFFKEDWVPRFSDRAIFTLAPVIAFTSLLLSFAIVPVSPTWAVADLNIGILFFLMMAGLAVYAVLFAGWASNNKYSLLGAMRASAQTLSYEVFLGLSLMGVVAQAGSFNMQDIVNSQEHVWNVIPQFFGFLTFAIAGVAVCHRHPFDQPEAEQELADGYHIEYSGMKFGLFFVGEYIGIVTVSALIVTLFFGGWQGPFLPPFIWFALKTAFFMVMFILIRASLPRPRYDQVMSFGWKVCLPLTLLNLLATAAVILYNAQ.

The next 8 membrane-spanning stretches (helical) occupy residues 11-31, 81-101, 114-134, 154-174, 186-206, 237-257, 265-285, and 304-324; these read ILIS…CGAF, AIFT…FAIV, IGIL…LFAG, LSYE…AGSF, VWNV…GVAV, FFVG…TLFF, LPPF…FILI, and VCLP…LYNA.

The protein belongs to the complex I subunit 1 family. As to quaternary structure, NDH-1 is composed of 13 different subunits. Subunits NuoA, H, J, K, L, M, N constitute the membrane sector of the complex.

It localises to the cell inner membrane. The catalysed reaction is a quinone + NADH + 5 H(+)(in) = a quinol + NAD(+) + 4 H(+)(out). In terms of biological role, NDH-1 shuttles electrons from NADH, via FMN and iron-sulfur (Fe-S) centers, to quinones in the respiratory chain. The immediate electron acceptor for the enzyme in this species is believed to be ubiquinone. Couples the redox reaction to proton translocation (for every two electrons transferred, four hydrogen ions are translocated across the cytoplasmic membrane), and thus conserves the redox energy in a proton gradient. This subunit may bind ubiquinone. This Yersinia pseudotuberculosis serotype O:1b (strain IP 31758) protein is NADH-quinone oxidoreductase subunit H.